The sequence spans 319 residues: D-galacturonate reductase (319 aa).

Residue tyrosine 58 is the Proton donor of the active site. Substrate is bound at residue histidine 121. Residue 216 to 275 (SPLGAARTKWGDDRVLGSDIIEEIAQAKGKSTAQISLRWVYEQGVSIVTKSYNKERMRQN) coordinates NADP(+).

This sequence belongs to the aldo/keto reductase family. As to expression, expressed specifically in the receptacle tissue of the fruit.

It carries out the reaction L-galactonate + NADP(+) = aldehydo-D-galacturonate + NADPH + H(+). Its pathway is cofactor biosynthesis; L-ascorbate biosynthesis. In terms of biological role, involved in ascorbic acid (vitamin C) biosynthesis. The protein is D-galacturonate reductase (GALUR) of Fragaria ananassa (Strawberry).